Reading from the N-terminus, the 568-residue chain is MERKAIIEFKDFTAHYTVQSKPTLNNINLTIYEGEKVLIAGPSGSGKSTLANCINGLIPFSTDIEISGSLKIKGKETKDLSVFEISKMVGTVLQDPDSQFIGLTVAEDIAFKLENNCVSQEEMKKKVNYVSKIVDIENRLDLAPYSLSGGQKQRVTLAGTIVDDVDILLFDEPLASLDPAAGKASIELIDKIQKEEKKTVIIIEHRLEEVLNCDVDRIILMNEGEIIADTNPNEILASNKLKECGIREPLYITALKYSGYELNKEMNLENIDKLKLSDDGEKLKTWYKSLNFNKKEREEDTLLEFKNVSFSYDKKKDILSDINFKINRGDIVSVVGKNGAGKSTISKIICGFFKESKGDILFEGKSLDGKTIKERGEEIGVVLQNPNQMISKTMIFDEVALGLRVRGIDEKEVKERVIETLKTCGLYPYRNWPVSALSFGQKKRVTIASILVLNPKVIILDEPTAGQDYKHYNEIMEFLLKLNKKGVTIILITHDMHLMLEYTDKAIVISNGRKIADTTSAEILTDKEVIEKASLKETSLYDLALKFKLEDPKDFVCKFIDFDRGARN.

2 consecutive ABC transporter domains span residues isoleucine 7–glutamate 248 and leucine 303–lysine 536. Residues glycine 41–serine 48 and glycine 336–serine 343 contribute to the ATP site.

The protein belongs to the ABC transporter superfamily.

The protein resides in the cell membrane. In terms of biological role, probably part of an ABC transporter complex. Responsible for energy coupling to the transport system. The polypeptide is Putative ABC transporter ATP-binding protein CPE1583 (Clostridium perfringens (strain 13 / Type A)).